The chain runs to 31 residues: Bacteriocin leucocin-B (31 aa).

The protein resides in the secreted. Functionally, inhibits a wide spectrum of lactic acid bacteria. The polypeptide is Bacteriocin leucocin-B (Leuconostoc mesenteroides).